The sequence spans 149 residues: Large ribosomal subunit protein uL13 (149 aa).

Belongs to the universal ribosomal protein uL13 family. In terms of assembly, part of the 50S ribosomal subunit.

In terms of biological role, this protein is one of the early assembly proteins of the 50S ribosomal subunit, although it is not seen to bind rRNA by itself. It is important during the early stages of 50S assembly. This is Large ribosomal subunit protein uL13 from Borrelia turicatae (strain 91E135).